We begin with the raw amino-acid sequence, 185 residues long: Ribosome-recycling factor (185 aa).

This sequence belongs to the RRF family.

Its subcellular location is the cytoplasm. Responsible for the release of ribosomes from messenger RNA at the termination of protein biosynthesis. May increase the efficiency of translation by recycling ribosomes from one round of translation to another. The protein is Ribosome-recycling factor of Glaesserella parasuis serovar 5 (strain SH0165) (Haemophilus parasuis).